The chain runs to 299 residues: Transcription factor srbB (299 aa).

Disordered stretches follow at residues 1 to 33 (MAYNNRPDASTAFTFDNDDRFVNQQPKGPDPLS) and 81 to 204 (ISGF…NAAK). Residues 161-170 (PVTSQATTSP) are compositionally biased toward low complexity. Residues 188 to 199 (RSLSTDSQTATG) are compositionally biased toward polar residues. Residues 203–216 (AKRAAHNIIEKRYR) are basic motif. Residues 203-264 (AKRAAHNIIE…TNAIAYMQEL (62 aa)) enclose the bHLH domain. Positions 217–264 (TNMNAKFVALEKAMSGSGVQKPTKGGSGPASLKKSEILTNAIAYMQEL) are helix-loop-helix motif. Positions 254-281 (LTNAIAYMQELQDQNAALQKELALLKQN) form a coiled coil.

Its subcellular location is the nucleus. Key transcription factors critical for hypoxia adaptation and virulence. Plays a major role in regulation of heme biosynthesis and carbohydrate metabolism early in the response to hypoxia. This chain is Transcription factor srbB, found in Aspergillus fumigatus (strain ATCC MYA-4609 / CBS 101355 / FGSC A1100 / Af293) (Neosartorya fumigata).